We begin with the raw amino-acid sequence, 366 residues long: Apolipoprotein A-V (366 aa).

Residues 1–23 (MASMAAVLTWALALLSAFSATQA) form the signal peptide. Coiled-coil stretches lie at residues 54-157 (ATLK…VGED) and 236-262 (TLKAKALHARIQQNLDQLREELSRAFA). A Phosphothreonine; by FAM20C modification is found at T55. S59 bears the Phosphoserine mark.

Belongs to the apolipoprotein A1/A4/E family. In terms of assembly, interacts with GPIHBP1. Interacts with SORL1; this interaction leads to APOA5 internalization and sorting either to lysosomes and degradation, or to the trans-Golgi network. Post-translationally, phosphorylated by FAM20C in the extracellular medium. In terms of tissue distribution, liver and plasma.

The protein localises to the secreted. It is found in the early endosome. It localises to the late endosome. The protein resides in the golgi apparatus. Its subcellular location is the trans-Golgi network. In terms of biological role, minor apolipoprotein mainly associated with HDL and to a lesser extent with VLDL. May also be associated with chylomicrons. Important determinant of plasma triglyceride (TG) levels by both being a potent stimulator of apo-CII lipoprotein lipase (LPL) TG hydrolysis and an inhibitor of the hepatic VLDL-TG production rate (without affecting the VLDL-apoB production rate). Activates poorly lecithin:cholesterol acyltransferase (LCAT) and does not enhance efflux of cholesterol from macrophages. Binds heparin. The sequence is that of Apolipoprotein A-V (APOA5) from Homo sapiens (Human).